A 559-amino-acid chain; its full sequence is Formate--tetrahydrofolate ligase (559 aa).

Residue 68 to 75 (TPAGEGKT) participates in ATP binding.

The protein belongs to the formate--tetrahydrofolate ligase family.

It catalyses the reaction (6S)-5,6,7,8-tetrahydrofolate + formate + ATP = (6R)-10-formyltetrahydrofolate + ADP + phosphate. Its pathway is one-carbon metabolism; tetrahydrofolate interconversion. The polypeptide is Formate--tetrahydrofolate ligase (Rhizobium meliloti (strain 1021) (Ensifer meliloti)).